Reading from the N-terminus, the 303-residue chain is Glycine--tRNA ligase alpha subunit (303 aa).

It belongs to the class-II aminoacyl-tRNA synthetase family. Tetramer of two alpha and two beta subunits.

It is found in the cytoplasm. The enzyme catalyses tRNA(Gly) + glycine + ATP = glycyl-tRNA(Gly) + AMP + diphosphate. This chain is Glycine--tRNA ligase alpha subunit, found in Cronobacter sakazakii (strain ATCC BAA-894) (Enterobacter sakazakii).